Reading from the N-terminus, the 366-residue chain is Protein sigma-NS (366 aa).

The segment at 1–11 (MASSLRAAISK) is important for ssRNA-binding and formation of complexes.

Belongs to the orthoreovirus sigma-NS protein family. In terms of assembly, homooligomer; in presence of RNA. Interacts with protein mu-NS; this interaction allows the localization of sigma-NS to the viral factories. Interacts with host G3BP1 (via C-terminus); this interaction induces the relocalization of G3BP1 and other SG proteins to the viral factories periphery.

The protein localises to the host cytoplasm. In terms of biological role, protein that binds to ssRNA and participates with protein mu-NS in forming the matrix of viral factories, which are large inclusions in the host cytoplasm where replication intermediates are assembled and viral RNA replication takes place. Plays a role in the inhibition of the integrated stress response (ISR) to escape from host cell translational shutoff. Participates in the disruption of stress granules (SG) through its association with host G3BP1 and mu-NS. The sequence is that of Protein sigma-NS (S3) from Mammalia (T2J).